Reading from the N-terminus, the 428-residue chain is YTH domain-containing protein ECT1 (428 aa).

In terms of domain architecture, YTH spans 245–382 (AKFFVIKSYS…EHGTKIIKIF (138 aa)). RNA is bound by residues 251 to 253 (KSY), D257, 267 to 268 (WS), N300, W324, W329, and W337.

In terms of assembly, interacts (via C-terminus) with CIPK1. In terms of tissue distribution, expressed in root apex, shoot apex, lateral root primordia, stamens, carpels and trichomes.

It is found in the nucleus. It localises to the cytoplasm. Functionally, specifically recognizes and binds N6-methyladenosine (m6A)-containing RNAs, and regulates mRNA stability. M6A is a modification present at internal sites of mRNAs and some non-coding RNAs and plays a role in mRNA stability and processing. The protein is YTH domain-containing protein ECT1 of Arabidopsis thaliana (Mouse-ear cress).